A 211-amino-acid polypeptide reads, in one-letter code: Probable transcriptional regulatory protein SgaR (211 aa).

Positions 10-126 (EVSIVDQNPV…VLLEAVVSVA (117 aa)) constitute a Response regulatory domain. Asp15 is modified (4-aspartylphosphate). One can recognise an HTH luxR-type domain in the interval 141–206 (NHDPLESLTA…MAVALHVSIN (66 aa)). Positions 165–184 (NLQIAARTGISRNTVKYHLK) form a DNA-binding region, H-T-H motif.

Functionally, not known. Could act on the sgaA gene expression. The chain is Probable transcriptional regulatory protein SgaR (sgaR) from Hyphomicrobium methylovorum.